Reading from the N-terminus, the 70-residue chain is MPAIRVKENEPFEVAMRRFKRAVEKTGLLTELRAREAYEKPTTERKRKKAAAVKRLQKRLRSQQLPPKMY.

The protein belongs to the bacterial ribosomal protein bS21 family.

In Neisseria gonorrhoeae (strain ATCC 700825 / FA 1090), this protein is Small ribosomal subunit protein bS21.